The following is a 347-amino-acid chain: Holliday junction branch migration complex subunit RuvB (347 aa).

The tract at residues 1-183 is large ATPase domain (RuvB-L); that stretch reads MSEERFVSGH…FGVVLQLQFY (183 aa). Residues Leu22, Arg23, Gly64, Lys67, Thr68, Thr69, 130–132, Arg173, Tyr183, and Arg220 each bind ATP; that span reads EDF. Residue Thr68 participates in Mg(2+) binding. Positions 184–254 are small ATPAse domain (RuvB-S); it reads SEEELTRILM…VADAGLRMMG (71 aa). Positions 257-347 are head domain (RuvB-H); the sequence is AMGLDTVDHK…PEGPVQPRLF (91 aa). Positions 312 and 317 each coordinate DNA.

The protein belongs to the RuvB family. Homohexamer. Forms an RuvA(8)-RuvB(12)-Holliday junction (HJ) complex. HJ DNA is sandwiched between 2 RuvA tetramers; dsDNA enters through RuvA and exits via RuvB. An RuvB hexamer assembles on each DNA strand where it exits the tetramer. Each RuvB hexamer is contacted by two RuvA subunits (via domain III) on 2 adjacent RuvB subunits; this complex drives branch migration. In the full resolvosome a probable DNA-RuvA(4)-RuvB(12)-RuvC(2) complex forms which resolves the HJ.

The protein resides in the cytoplasm. It carries out the reaction ATP + H2O = ADP + phosphate + H(+). Its function is as follows. The RuvA-RuvB-RuvC complex processes Holliday junction (HJ) DNA during genetic recombination and DNA repair, while the RuvA-RuvB complex plays an important role in the rescue of blocked DNA replication forks via replication fork reversal (RFR). RuvA specifically binds to HJ cruciform DNA, conferring on it an open structure. The RuvB hexamer acts as an ATP-dependent pump, pulling dsDNA into and through the RuvAB complex. RuvB forms 2 homohexamers on either side of HJ DNA bound by 1 or 2 RuvA tetramers; 4 subunits per hexamer contact DNA at a time. Coordinated motions by a converter formed by DNA-disengaged RuvB subunits stimulates ATP hydrolysis and nucleotide exchange. Immobilization of the converter enables RuvB to convert the ATP-contained energy into a lever motion, pulling 2 nucleotides of DNA out of the RuvA tetramer per ATP hydrolyzed, thus driving DNA branch migration. The RuvB motors rotate together with the DNA substrate, which together with the progressing nucleotide cycle form the mechanistic basis for DNA recombination by continuous HJ branch migration. Branch migration allows RuvC to scan DNA until it finds its consensus sequence, where it cleaves and resolves cruciform DNA. In Symbiobacterium thermophilum (strain DSM 24528 / JCM 14929 / IAM 14863 / T), this protein is Holliday junction branch migration complex subunit RuvB.